Reading from the N-terminus, the 596-residue chain is Elongation factor 4 (596 aa).

The 183-residue stretch at K2–E184 folds into the tr-type G domain. GTP contacts are provided by residues D14–T19 and N131–D134.

It belongs to the TRAFAC class translation factor GTPase superfamily. Classic translation factor GTPase family. LepA subfamily.

Its subcellular location is the cell inner membrane. It catalyses the reaction GTP + H2O = GDP + phosphate + H(+). Functionally, required for accurate and efficient protein synthesis under certain stress conditions. May act as a fidelity factor of the translation reaction, by catalyzing a one-codon backward translocation of tRNAs on improperly translocated ribosomes. Back-translocation proceeds from a post-translocation (POST) complex to a pre-translocation (PRE) complex, thus giving elongation factor G a second chance to translocate the tRNAs correctly. Binds to ribosomes in a GTP-dependent manner. In Shewanella putrefaciens (strain CN-32 / ATCC BAA-453), this protein is Elongation factor 4.